The sequence spans 323 residues: Ubiquinone biosynthesis protein COQ4, mitochondrial (323 aa).

Residues His205, Asp206, His209, and Glu221 each coordinate Zn(2+).

This sequence belongs to the COQ4 family. As to quaternary structure, component of a multi-subunit COQ enzyme complex, composed of at least COQ3, COQ4, COQ5, COQ6, COQ7 and COQ9. Zn(2+) serves as cofactor.

Its subcellular location is the mitochondrion inner membrane. It carries out the reaction a 4-hydroxy-3-methoxy-5-(all-trans-polyprenyl)benzoate + H(+) = a 2-methoxy-6-(all-trans-polyprenyl)phenol + CO2. It participates in cofactor biosynthesis; ubiquinone biosynthesis. In terms of biological role, lyase that catalyzes the C1-decarboxylation of 4-hydroxy-3-methoxy-5-(all-trans-polyprenyl)benzoic acid into 2-methoxy-6-(all-trans-polyprenyl)phenol during ubiquinone biosynthesis. The protein is Ubiquinone biosynthesis protein COQ4, mitochondrial of Candida albicans (strain SC5314 / ATCC MYA-2876) (Yeast).